The following is a 61-amino-acid chain: Sec-independent protein translocase protein TatA (61 aa).

Residues 1-21 (MFGIGMPELIVILVIVLVVFG) form a helical membrane-spanning segment.

This sequence belongs to the TatA/E family. The Tat system comprises two distinct complexes: a TatABC complex, containing multiple copies of TatA, TatB and TatC subunits, and a separate TatA complex, containing only TatA subunits. Substrates initially bind to the TatABC complex, which probably triggers association of the separate TatA complex to form the active translocon.

It is found in the cell inner membrane. Functionally, part of the twin-arginine translocation (Tat) system that transports large folded proteins containing a characteristic twin-arginine motif in their signal peptide across membranes. TatA could form the protein-conducting channel of the Tat system. In Geobacter metallireducens (strain ATCC 53774 / DSM 7210 / GS-15), this protein is Sec-independent protein translocase protein TatA.